The following is a 790-amino-acid chain: Valine--tRNA ligase (790 aa).

Residues 40–50 carry the 'HIGH' region motif; it reads PTVSGKMHMGH. The 'KMSKS' region motif lies at 521–525; that stretch reads KMSKS. Lys-524 contributes to the ATP binding site.

Belongs to the class-I aminoacyl-tRNA synthetase family. ValS type 2 subfamily.

It localises to the cytoplasm. The enzyme catalyses tRNA(Val) + L-valine + ATP = L-valyl-tRNA(Val) + AMP + diphosphate. In terms of biological role, catalyzes the attachment of valine to tRNA(Val). As ValRS can inadvertently accommodate and process structurally similar amino acids such as threonine, to avoid such errors, it has a 'posttransfer' editing activity that hydrolyzes mischarged Thr-tRNA(Val) in a tRNA-dependent manner. In Thermoplasma volcanium (strain ATCC 51530 / DSM 4299 / JCM 9571 / NBRC 15438 / GSS1), this protein is Valine--tRNA ligase.